Consider the following 109-residue polypeptide: Sulredoxin (109 aa).

Positions 3 to 107 constitute a Rieske domain; that stretch reads WKRTISAKAL…IRDNNGWIEV (105 aa). Cysteine 43, histidine 45, cysteine 62, and histidine 65 together coordinate [2Fe-2S] cluster.

Homooligomeric. [2Fe-2S] cluster is required as a cofactor.

The protein resides in the cytoplasm. Not yet known. The protein is Sulredoxin (sdx) of Sulfurisphaera tokodaii (strain DSM 16993 / JCM 10545 / NBRC 100140 / 7) (Sulfolobus tokodaii).